The chain runs to 101 residues: Iron-sulfur cluster assembly protein CyaY (101 aa).

Belongs to the frataxin family.

In terms of biological role, involved in iron-sulfur (Fe-S) cluster assembly. May act as a regulator of Fe-S biogenesis. The chain is Iron-sulfur cluster assembly protein CyaY from Haemophilus influenzae (strain 86-028NP).